Here is a 142-residue protein sequence, read N- to C-terminus: Small ribosomal subunit protein uS9 (142 aa).

It belongs to the universal ribosomal protein uS9 family. Component of the small ribosomal subunit. Mature ribosomes consist of a small (40S) and a large (60S) subunit. The 40S subunit contains about 32 different proteins and 1 molecule of RNA (18S). The 60S subunit contains 45 different proteins and 3 molecules of RNA (25S, 5.8S and 5S).

Its subcellular location is the cytoplasm. Its function is as follows. Component of the ribosome, a large ribonucleoprotein complex responsible for the synthesis of proteins in the cell. The small ribosomal subunit (SSU) binds messenger RNAs (mRNAs) and translates the encoded message by selecting cognate aminoacyl-transfer RNA (tRNA) molecules. The large subunit (LSU) contains the ribosomal catalytic site termed the peptidyl transferase center (PTC), which catalyzes the formation of peptide bonds, thereby polymerizing the amino acids delivered by tRNAs into a polypeptide chain. The nascent polypeptides leave the ribosome through a tunnel in the LSU and interact with protein factors that function in enzymatic processing, targeting, and the membrane insertion of nascent chains at the exit of the ribosomal tunnel. This chain is Small ribosomal subunit protein uS9 (RPS16A), found in Candida albicans (strain SC5314 / ATCC MYA-2876) (Yeast).